We begin with the raw amino-acid sequence, 429 residues long: Enolase (429 aa).

Glutamine 163 is a (2R)-2-phosphoglycerate binding site. Glutamate 205 acts as the Proton donor in catalysis. Residues aspartate 242, glutamate 285, and aspartate 312 each coordinate Mg(2+). Positions 337, 366, 367, and 388 each coordinate (2R)-2-phosphoglycerate. Lysine 337 acts as the Proton acceptor in catalysis.

The protein belongs to the enolase family. The cofactor is Mg(2+).

It localises to the cytoplasm. The protein resides in the secreted. It is found in the cell surface. The catalysed reaction is (2R)-2-phosphoglycerate = phosphoenolpyruvate + H2O. It participates in carbohydrate degradation; glycolysis; pyruvate from D-glyceraldehyde 3-phosphate: step 4/5. Its function is as follows. Catalyzes the reversible conversion of 2-phosphoglycerate (2-PG) into phosphoenolpyruvate (PEP). It is essential for the degradation of carbohydrates via glycolysis. In Azoarcus sp. (strain BH72), this protein is Enolase.